The primary structure comprises 231 residues: ATP phosphoribosyltransferase (231 aa).

This sequence belongs to the ATP phosphoribosyltransferase family. Short subfamily. As to quaternary structure, heteromultimer composed of HisG and HisZ subunits.

The protein resides in the cytoplasm. The catalysed reaction is 1-(5-phospho-beta-D-ribosyl)-ATP + diphosphate = 5-phospho-alpha-D-ribose 1-diphosphate + ATP. The protein operates within amino-acid biosynthesis; L-histidine biosynthesis; L-histidine from 5-phospho-alpha-D-ribose 1-diphosphate: step 1/9. Its function is as follows. Catalyzes the condensation of ATP and 5-phosphoribose 1-diphosphate to form N'-(5'-phosphoribosyl)-ATP (PR-ATP). Has a crucial role in the pathway because the rate of histidine biosynthesis seems to be controlled primarily by regulation of HisG enzymatic activity. The sequence is that of ATP phosphoribosyltransferase from Brucella suis biovar 1 (strain 1330).